The sequence spans 215 residues: Thiamine-phosphate synthase (215 aa).

4-amino-2-methyl-5-(diphosphooxymethyl)pyrimidine is bound by residues 37-41 (QLRIK) and N69. D70 and D89 together coordinate Mg(2+). S108 is a 4-amino-2-methyl-5-(diphosphooxymethyl)pyrimidine binding site. 134-136 (TQT) is a 2-[(2R,5Z)-2-carboxy-4-methylthiazol-5(2H)-ylidene]ethyl phosphate binding site. K137 contributes to the 4-amino-2-methyl-5-(diphosphooxymethyl)pyrimidine binding site. Residues G166 and 186 to 187 (VS) contribute to the 2-[(2R,5Z)-2-carboxy-4-methylthiazol-5(2H)-ylidene]ethyl phosphate site.

Belongs to the thiamine-phosphate synthase family. Mg(2+) is required as a cofactor.

The catalysed reaction is 2-[(2R,5Z)-2-carboxy-4-methylthiazol-5(2H)-ylidene]ethyl phosphate + 4-amino-2-methyl-5-(diphosphooxymethyl)pyrimidine + 2 H(+) = thiamine phosphate + CO2 + diphosphate. It catalyses the reaction 2-(2-carboxy-4-methylthiazol-5-yl)ethyl phosphate + 4-amino-2-methyl-5-(diphosphooxymethyl)pyrimidine + 2 H(+) = thiamine phosphate + CO2 + diphosphate. The enzyme catalyses 4-methyl-5-(2-phosphooxyethyl)-thiazole + 4-amino-2-methyl-5-(diphosphooxymethyl)pyrimidine + H(+) = thiamine phosphate + diphosphate. Its pathway is cofactor biosynthesis; thiamine diphosphate biosynthesis; thiamine phosphate from 4-amino-2-methyl-5-diphosphomethylpyrimidine and 4-methyl-5-(2-phosphoethyl)-thiazole: step 1/1. Its function is as follows. Condenses 4-methyl-5-(beta-hydroxyethyl)thiazole monophosphate (THZ-P) and 2-methyl-4-amino-5-hydroxymethyl pyrimidine pyrophosphate (HMP-PP) to form thiamine monophosphate (TMP). The sequence is that of Thiamine-phosphate synthase from Yersinia pseudotuberculosis serotype I (strain IP32953).